Reading from the N-terminus, the 380-residue chain is Cell division protein FtsZ (380 aa).

GTP-binding positions include 27-31, 119-121, glutamate 150, and asparagine 189; these read GAGNN and GTG.

It belongs to the FtsZ family. In terms of assembly, homodimer. Polymerizes to form a dynamic ring structure in a strictly GTP-dependent manner. Interacts directly with several other division proteins.

The protein localises to the cytoplasm. Essential cell division protein that forms a contractile ring structure (Z ring) at the future cell division site. The regulation of the ring assembly controls the timing and the location of cell division. One of the functions of the FtsZ ring is to recruit other cell division proteins to the septum to produce a new cell wall between the dividing cells. Binds GTP and shows GTPase activity. This chain is Cell division protein FtsZ, found in Mycoplasma pneumoniae (strain ATCC 29342 / M129 / Subtype 1) (Mycoplasmoides pneumoniae).